The primary structure comprises 355 residues: RGG repeats nuclear RNA binding protein A (355 aa).

A2 is subject to N-acetylalanine. Positions 26-225 (KIDKSKKSGQ…VEEKEPEDKE (200 aa)) are disordered. Over residues 37 to 47 (SSLPAKSAPKL) the composition is skewed to low complexity. Composition is skewed to gly residues over residues 67-81 (RGGG…GRGG) and 114-141 (GGGA…SNEG). The Nuclear localization signal signature appears at 132-139 (GRRGGFSN). Residues 143–168 (DGERPRRAFERRSGTGRGSDFKRDGS) are compositionally biased toward basic and acidic residues. An Arginine-rich RNA-binding motif E-R-P-R-R-X-[F/Y]-[E/D]-R-R-S motif is present at residues 145 to 155 (ERPRRAFERRS). A compositionally biased stretch (low complexity) spans 177–190 (GEEIAAETEAVAGV). Composition is skewed to basic and acidic residues over residues 191–202 (ETEKDVGEKPAV) and 209–225 (ANKE…EDKE). The 56-residue stretch at 234–289 (ILEEKKKALQSLTTSERKVDTKVFESMQQLSNKKSNDEIFIKLGSDKDKRKDDKEE) folds into the FF domain. S268 is modified (phosphoserine). A compositionally biased stretch (basic and acidic residues) spans 277-292 (GSDKDKRKDDKEEKAK). Positions 277–355 (GSDKDKRKDD…AAQFPSLGGK (79 aa)) are disordered. Positions 323–333 (GRGGVSSGESG) are enriched in gly residues. S351 bears the Phosphoserine mark.

The protein belongs to the SERBP1-HABP4 family. As to expression, expressed in seedlings, leaves, roots, inflorescences, and siliques. Constitutively expressed in seedlings and roots.

The protein resides in the cytoplasm. The protein localises to the perinuclear region. It localises to the nucleus. In terms of biological role, ribosome-binding protein that acts as a regulator of mRNA translation by promoting ribosome inactivation. Binds RNA. Regulates responses to abscisic acid (ABA). Promotes stomata closure in drought conditions. Involved in resistance to salt and drought stresses via the accumulation of Pro. The chain is RGG repeats nuclear RNA binding protein A from Arabidopsis thaliana (Mouse-ear cress).